The following is a 352-amino-acid chain: Glycerol-1-phosphate dehydrogenase [NAD(P)+] (352 aa).

NAD(+) contacts are provided by residues 99-103 (GKSID) and 121-124 (TVAS). Asp-126 is a substrate binding site. NAD(+) is bound at residue Ser-130. Asp-173 provides a ligand contact to substrate. 2 residues coordinate Zn(2+): Asp-173 and His-253. Position 257 (His-257) interacts with substrate. Position 269 (His-269) interacts with Zn(2+).

This sequence belongs to the glycerol-1-phosphate dehydrogenase family. In terms of assembly, homodimer. Zn(2+) serves as cofactor.

Its subcellular location is the cytoplasm. The enzyme catalyses sn-glycerol 1-phosphate + NAD(+) = dihydroxyacetone phosphate + NADH + H(+). It catalyses the reaction sn-glycerol 1-phosphate + NADP(+) = dihydroxyacetone phosphate + NADPH + H(+). It participates in membrane lipid metabolism; glycerophospholipid metabolism. With respect to regulation, totally inhibited by EDTA in vitro. Catalyzes the NAD(P)H-dependent reduction of dihydroxyacetonephosphate (DHAP or glycerone phosphate) to glycerol 1-phosphate (G1P). The G1P thus generated is used as the glycerophosphate backbone of phospholipids in the cellular membranes of Archaea. Is also able to catalyze the reverse reaction, i.e. the NAD(+)-dependent oxidation of G1P but not of G3P. Is not active toward glycerol, dihydroxyacetone, glyceraldehyde phosphate, and glycerol-2-phosphate. The chain is Glycerol-1-phosphate dehydrogenase [NAD(P)+] (egsA) from Aeropyrum pernix (strain ATCC 700893 / DSM 11879 / JCM 9820 / NBRC 100138 / K1).